Consider the following 62-residue polypeptide: Conotoxin reg3.5 (62 aa).

The N-terminal stretch at 1–22 (MMFKLGVLLTICLLLFPLTGTA) is a signal peptide. A propeptide spanning residues 23–49 (LDGDQLAEHMLDISSGINDRWFDPVRK) is cleaved from the precursor. Cystine bridges form between Cys50/Cys60, Cys51/Cys58, and Cys56/Cys61.

Belongs to the conotoxin M superfamily. In terms of tissue distribution, expressed by the venom duct.

It is found in the secreted. This is Conotoxin reg3.5 from Conus regius (Crown cone).